Consider the following 549-residue polypeptide: Frizzled/smoothened-like sans CRD protein A (549 aa).

Residues 1 to 22 form the signal peptide; sequence MKFNFKLILIILIINQILIINC. The Extracellular segment spans residues 23–89; sequence KENKILEIYK…EVNTLSLMIK (67 aa). N-linked (GlcNAc...) asparagine glycosylation is present at Asn63. Residues 90–110 traverse the membrane as a helical segment; that stretch reads ITGTISFIASLILLLIYSPLI. Residues 111–119 lie on the Cytoplasmic side of the membrane; that stretch reads NRMGYNRHT. The chain crosses the membrane as a helical span at residues 120–140; that stretch reads IGIFFLTFSVFLIMLTDIIYV. The Extracellular segment spans residues 141-162; sequence HHGNDLICPQSHRYSRQNDSGC. Residue Asn158 is glycosylated (N-linked (GlcNAc...) asparagine). Residues 163–183 form a helical membrane-spanning segment; sequence TITGILFQYGCIAAVLFWATL. Topologically, residues 184–198 are cytoplasmic; the sequence is SLDLYLTLKKISTKK. A helical transmembrane segment spans residues 199–219; sequence VEKWYLIILTLIALILTFVPL. The Extracellular segment spans residues 220–241; sequence VKKSYGYLVTGLACWILDSTDQ. Residues 242-262 form a helical membrane-spanning segment; sequence IIFFWAPFTAILGIGSILIVL. Topologically, residues 263 to 287 are cytoplasmic; the sequence is VVYEIYKISKITKQNRGIFQSHIRP. Residues 288-308 traverse the membrane as a helical segment; it reads LLMVLFIFGQFLFILAFNALI. Residues 309–346 are Extracellular-facing; the sequence is NNKYDEYSARMDSYIDCLFSSSSYSYLCRLKTFPFEME. Residues 347–367 traverse the membrane as a helical segment; the sequence is FIVLFFLRLIGIEVLIFYGFT. The Cytoplasmic segment spans residues 368–549; that stretch reads QQTKKILLHS…NNNSNNDENN (182 aa). Composition is skewed to low complexity over residues 417–474 and 536–549; these read NNNN…SQQN and NKNI…DENN. Disordered stretches follow at residues 417–483 and 528–549; these read NNNN…QKLS and QYEE…DENN. A coiled-coil region spans residues 432-475; sequence NNLNNNLNNNNLNNNNNLNNLNNLNINNNLKNSQNNLNNSQQNE.

The protein belongs to the G-protein coupled receptor Fz/Smo family.

It localises to the membrane. The chain is Frizzled/smoothened-like sans CRD protein A (fscA) from Dictyostelium discoideum (Social amoeba).